The following is a 126-amino-acid chain: Large ribosomal subunit protein uL22 (126 aa).

This sequence belongs to the universal ribosomal protein uL22 family. Part of the 50S ribosomal subunit.

Its function is as follows. This protein binds specifically to 23S rRNA; its binding is stimulated by other ribosomal proteins, e.g. L4, L17, and L20. It is important during the early stages of 50S assembly. It makes multiple contacts with different domains of the 23S rRNA in the assembled 50S subunit and ribosome. In terms of biological role, the globular domain of the protein is located near the polypeptide exit tunnel on the outside of the subunit, while an extended beta-hairpin is found that lines the wall of the exit tunnel in the center of the 70S ribosome. The protein is Large ribosomal subunit protein uL22 of Paracoccus denitrificans (strain Pd 1222).